We begin with the raw amino-acid sequence, 621 residues long: Chaperone protein HtpG (621 aa).

The tract at residues 1–325 (MTDASVKETF…SQDLSLNVSR (325 aa)) is a; substrate-binding. Residues 326–541 (EMLQSDPKLA…EGDIDVNLER (216 aa)) are b. Residues 542 to 621 (MLKRHGQLQD…RLGSVMDSAL (80 aa)) form a c region.

This sequence belongs to the heat shock protein 90 family. In terms of assembly, homodimer.

The protein resides in the cytoplasm. Its function is as follows. Molecular chaperone. Has ATPase activity. In Roseobacter denitrificans (strain ATCC 33942 / OCh 114) (Erythrobacter sp. (strain OCh 114)), this protein is Chaperone protein HtpG.